Reading from the N-terminus, the 164-residue chain is uncharacterized protein (164 aa).

The disordered stretch occupies residues 1 to 77 (MGQKKTMGTE…PCSIRDAPFH (77 aa)).

This is an uncharacterized protein from Homo sapiens (Human).